Consider the following 191-residue polypeptide: Probable protein adenylyltransferase HI_0977 (191 aa).

Residues 37-162 (GSTKGLQQIH…NDLEIRFLLQ (126 aa)) form the Fido domain. Residues 67-68 (KG), 112-114 (GNG), Arg-118, and Gln-145 contribute to the ATP site.

It belongs to the fic family.

The catalysed reaction is L-tyrosyl-[protein] + ATP = O-(5'-adenylyl)-L-tyrosyl-[protein] + diphosphate. The enzyme catalyses L-threonyl-[protein] + ATP = 3-O-(5'-adenylyl)-L-threonyl-[protein] + diphosphate. Its function is as follows. Probable adenylyltransferase that mediates the addition of adenosine 5'-monophosphate (AMP) to specific residues of target proteins. The polypeptide is Probable protein adenylyltransferase HI_0977 (Haemophilus influenzae (strain ATCC 51907 / DSM 11121 / KW20 / Rd)).